The primary structure comprises 382 residues: Galactokinase (382 aa).

34–37 (EHTD) is a binding site for substrate. 124–130 (GAGLSSS) serves as a coordination point for ATP. Positions 130 and 162 each coordinate Mg(2+). Catalysis depends on Asp174, which acts as the Proton acceptor. Tyr223 serves as a coordination point for substrate.

This sequence belongs to the GHMP kinase family. GalK subfamily.

The protein localises to the cytoplasm. It catalyses the reaction alpha-D-galactose + ATP = alpha-D-galactose 1-phosphate + ADP + H(+). Its pathway is carbohydrate metabolism; galactose metabolism. Functionally, catalyzes the transfer of the gamma-phosphate of ATP to D-galactose to form alpha-D-galactose-1-phosphate (Gal-1-P). The chain is Galactokinase from Salmonella paratyphi A (strain ATCC 9150 / SARB42).